The chain runs to 519 residues: Major facilitator superfamily domain-containing protein 8 (519 aa).

The interval 1–25 is disordered; sequence MANLGSEAEREPLLGPGSPGSREWS. Residues 1–41 lie on the Cytoplasmic side of the membrane; sequence MANLGSEAEREPLLGPGSPGSREWSEIETQEHYKSRWKSVR. The short motif at 13–14 is the Dileucine internalization motif element; sequence LL. The chain crosses the membrane as a helical span at residues 42–62; the sequence is ILYLTMFLSSVGFSIVIMSIW. Residues 63–75 lie on the Extracellular side of the membrane; the sequence is PYLQKIDQTADAS. A helical transmembrane segment spans residues 76 to 96; that stretch reads FLGWVIASYSLGQMVASPLFG. Topologically, residues 97-106 are cytoplasmic; the sequence is LWSNYRPRKE. The chain crosses the membrane as a helical span at residues 107 to 127; it reads PLIVSISISVAANCLYAYVHV. At 128–140 the chain is on the extracellular side; sequence PAAHNKYYMLIAR. Residues 141–161 form a helical membrane-spanning segment; that stretch reads GLVGFGAGNVAVVRSYIAGAT. At 162-174 the chain is on the cytoplasmic side; sequence SLQERTNAMANTS. A helical membrane pass occupies residues 175-195; that stretch reads TCQALGFILGPVFQTCFALIG. The Extracellular portion of the chain corresponds to 196–212; the sequence is EKGVTWDIIKLQVNMYT. A helical transmembrane segment spans residues 213 to 233; the sequence is APVLLAAFLGILNIILILFIL. Over 234-267 the chain is Cytoplasmic; it reads REHRVDDLGRQCKSVNFQEENTDEPQIPEGSIDQ. The helical transmembrane segment at 268–288 threads the bilayer; that stretch reads VAVVATNIVFFVVLFIFAVYE. At 289-310 the chain is on the extracellular side; that stretch reads TILTPLTLDMYAWTQEQAVLYD. A helical membrane pass occupies residues 311–331; that stretch reads GILLVAFGVEAVLVFMGVKLL. The Cytoplasmic portion of the chain corresponds to 332–338; it reads SKKIGER. A helical transmembrane segment spans residues 339 to 359; sequence AILLGGFVVVWVGFFILLPWG. Topologically, residues 360-416 are extracellular; the sequence is NQFPKIQWEDLHNSSTPNTTFGEIIIGLWNSSREDHSEQPTGCPIEQTWCLYTPVIH. Residues Asn372 and Asn377 are each glycosylated (N-linked (GlcNAc...) asparagine). Residues 417 to 439 form a helical membrane-spanning segment; sequence LAQFLTAAVLIGTGYPACSVMSY. Topologically, residues 440 to 452 are cytoplasmic; sequence TLYSKVLGPKPQG. Residues 453 to 473 traverse the membrane as a helical segment; sequence IYMGWLTTSGSAARILGPVFI. Residues 474 to 483 lie on the Extracellular side of the membrane; the sequence is SHVYTYLGPR. Residues 484-504 traverse the membrane as a helical segment; the sequence is WAFSLVCGIVVLTILLIGAVY. Over 505 to 519 the chain is Cytoplasmic; that stretch reads KRLVAFSVRYMRIQE.

This sequence belongs to the major facilitator superfamily.

The protein localises to the endosome membrane. It is found in the lysosome membrane. It carries out the reaction chloride(in) = chloride(out). The catalysed reaction is iodide(out) = iodide(in). It catalyses the reaction fluoride(in) = fluoride(out). Functionally, outward-rectifying chloride channel involved in endolysosomal chloride homeostasis, membrane fusion and function. Conducts chloride currents up to hundreds of picoamperes. Regulates lysosomal calcium content by reducing the lysosomal membrane potential, thereby activating TRPML1 channel and further release of lysosomal calcium ions. Regulates the pH in endolysosomal compartments and may contribute to progressive acidification from endosome to lysosome. Permeable to other halides such as iodide and fluoride ions. The protein is Major facilitator superfamily domain-containing protein 8 of Mus musculus (Mouse).